Here is a 473-residue protein sequence, read N- to C-terminus: Photosystem II CP43 reaction center protein (473 aa).

Residues 1 to 14 (MKTLYSLRRFYPVE) constitute a propeptide that is removed on maturation. Position 15 is an N-acetylthreonine (T15). The residue at position 15 (T15) is a Phosphothreonine. The next 5 membrane-spanning stretches (helical) occupy residues 69 to 93 (LFEV…PHLA), 134 to 155 (LIGP…KDRN), 178 to 200 (KALY…RKIT), 255 to 275 (KPFA…LSYS), and 291 to 312 (WFNN…ASQA). A [CaMn4O5] cluster-binding site is contributed by E367. A helical membrane pass occupies residues 447–471 (RARAAAAGFEKGIDRDFEPVLSMTP).

Belongs to the PsbB/PsbC family. PsbC subfamily. As to quaternary structure, PSII is composed of 1 copy each of membrane proteins PsbA, PsbB, PsbC, PsbD, PsbE, PsbF, PsbH, PsbI, PsbJ, PsbK, PsbL, PsbM, PsbT, PsbX, PsbY, PsbZ, Psb30/Ycf12, at least 3 peripheral proteins of the oxygen-evolving complex and a large number of cofactors. It forms dimeric complexes. Binds multiple chlorophylls and provides some of the ligands for the Ca-4Mn-5O cluster of the oxygen-evolving complex. It may also provide a ligand for a Cl- that is required for oxygen evolution. PSII binds additional chlorophylls, carotenoids and specific lipids. serves as cofactor.

The protein localises to the plastid. It localises to the chloroplast thylakoid membrane. In terms of biological role, one of the components of the core complex of photosystem II (PSII). It binds chlorophyll and helps catalyze the primary light-induced photochemical processes of PSII. PSII is a light-driven water:plastoquinone oxidoreductase, using light energy to abstract electrons from H(2)O, generating O(2) and a proton gradient subsequently used for ATP formation. The sequence is that of Photosystem II CP43 reaction center protein from Cryptomeria japonica (Japanese cedar).